A 268-amino-acid chain; its full sequence is Undecaprenyl-diphosphatase (268 aa).

A run of 7 helical transmembrane segments spans residues serine 5–serine 25, glycine 43–phenylalanine 63, phenylalanine 84–isoleucine 104, alanine 106–leucine 126, alanine 184–leucine 204, phenylalanine 213–valine 233, and proline 248–glycine 268.

This sequence belongs to the UppP family.

It localises to the cell inner membrane. It carries out the reaction di-trans,octa-cis-undecaprenyl diphosphate + H2O = di-trans,octa-cis-undecaprenyl phosphate + phosphate + H(+). In terms of biological role, catalyzes the dephosphorylation of undecaprenyl diphosphate (UPP). Confers resistance to bacitracin. The polypeptide is Undecaprenyl-diphosphatase (Sinorhizobium fredii (strain NBRC 101917 / NGR234)).